The primary structure comprises 506 residues: FAD-linked oxidoreductase aurO (506 aa).

Residues 92–260 (ITAQPLAICR…AETDVRVYPM (169 aa)) form the FAD-binding PCMH-type domain.

It belongs to the oxygen-dependent FAD-linked oxidoreductase family. Might be part of an extracellular enzyme complex composed of GIP1, aurF, aurO and aurS. Requires FAD as cofactor.

It localises to the secreted. Its subcellular location is the extracellular space. It functions in the pathway pigment biosynthesis. FAD-linked oxidoreductase; part of the gene cluster that mediates the biosynthesis of aurofusarin, a red mycelium pigment which is acting as a mycotoxin. The first step is performed by the polyketide synthase which condenses one acetyl-CoA and 6 malonyl-CoA units to form the first intermediate, the cyclic heptaketide and yellow pigment YWA1. The C2 hydroxyl group in the pyrone ring of YWA1 is probably formed during ring closure by an aldol-type cyclization reaction. The dehydratase aurZ then acts as the first tailoring enzyme in the aurofusarin biosynthetic pathway by converting YWA1 to nor-rubrofusarin. Nor-rubrofusarin is then methylated to rubrofusarin by the O-methyltransferase aurJ. Rubrofusarin is then transported across the plasma membrane by the rubrofusarin-specific pump aurT for further enzymatic processing by the extracellular complex composed of GIP1, aurF, aurO and aurS to yield aurofusarin. The chain is FAD-linked oxidoreductase aurO from Gibberella zeae (strain ATCC MYA-4620 / CBS 123657 / FGSC 9075 / NRRL 31084 / PH-1) (Wheat head blight fungus).